Consider the following 89-residue polypeptide: Small ribosomal subunit protein bS20 (89 aa).

The disordered stretch occupies residues 1-26; the sequence is MANSPQAKKRARQNEKNRKHNASLRS. Over residues 7-22 the composition is skewed to basic residues; that stretch reads AKKRARQNEKNRKHNA.

Belongs to the bacterial ribosomal protein bS20 family.

Binds directly to 16S ribosomal RNA. The chain is Small ribosomal subunit protein bS20 from Marinobacter nauticus (strain ATCC 700491 / DSM 11845 / VT8) (Marinobacter aquaeolei).